We begin with the raw amino-acid sequence, 427 residues long: MNTSHSKELFAKAQEIIPGGVNSPVRAFKSVGAEPVFIKKASGSTIIDADDNAYIDYVGSWGPMILGHCHPRIVASVQRATENGSSFGAPTELEITLAEMVVAAVPSIEMVRMVSSGTEATMSAIRLARGYTGRDKIIKFSGCYHGHADSLLVKAGSGAATFGVPDSPGVPRDFAQHTLTATFNDLESVEELICAHSREVACIIVEPIAGNMGTVPPRAGFLEGLREICTNEGIILIFDEVMTGFRVAYGGAQERYGITPDMTTLGKIIGGGLPVGAFGGKREIMQQLSPSGGVYQAGTLSGNPLAMTAGIETLKLLQEDGFYGRLEEKSRALAEGIADAARRAGYPIYSTRVGSMFCAFFTNGEVHDWTSAAMCDTKSFATFFRSMLEEGIYLAPSQFETAFVSIAHSSEDIEKTIAAAFSCFKKL.

Lysine 267 is modified (N6-(pyridoxal phosphate)lysine).

It belongs to the class-III pyridoxal-phosphate-dependent aminotransferase family. HemL subfamily. In terms of assembly, homodimer. The cofactor is pyridoxal 5'-phosphate.

The protein resides in the cytoplasm. It carries out the reaction (S)-4-amino-5-oxopentanoate = 5-aminolevulinate. The protein operates within porphyrin-containing compound metabolism; protoporphyrin-IX biosynthesis; 5-aminolevulinate from L-glutamyl-tRNA(Glu): step 2/2. The protein is Glutamate-1-semialdehyde 2,1-aminomutase of Geobacter metallireducens (strain ATCC 53774 / DSM 7210 / GS-15).